Here is a 319-residue protein sequence, read N- to C-terminus: ATP-dependent 6-phosphofructokinase (319 aa).

G11 is an ATP binding site. 21–25 (RAVVR) lines the ADP pocket. Residues 72-73 (RC) and 102-105 (GEGS) contribute to the ATP site. E103 provides a ligand contact to Mg(2+). A substrate-binding site is contributed by 126-128 (TID). Catalysis depends on D128, which acts as the Proton acceptor. K155 contacts ADP. Substrate-binding positions include R163 and 170 to 172 (MGR). ADP-binding positions include 186 to 188 (GAE), R212, and 214 to 216 (KIN). Substrate is bound by residues E223, R244, and 250–253 (HVQR).

The protein belongs to the phosphofructokinase type A (PFKA) family. ATP-dependent PFK group I subfamily. Prokaryotic clade 'B1' sub-subfamily. Homotetramer. It depends on Mg(2+) as a cofactor.

Its subcellular location is the cytoplasm. It carries out the reaction beta-D-fructose 6-phosphate + ATP = beta-D-fructose 1,6-bisphosphate + ADP + H(+). Its pathway is carbohydrate degradation; glycolysis; D-glyceraldehyde 3-phosphate and glycerone phosphate from D-glucose: step 3/4. With respect to regulation, allosterically activated by ADP and other diphosphonucleosides, and allosterically inhibited by phosphoenolpyruvate. Functionally, catalyzes the phosphorylation of D-fructose 6-phosphate to fructose 1,6-bisphosphate by ATP, the first committing step of glycolysis. The protein is ATP-dependent 6-phosphofructokinase of Thermotoga neapolitana (strain ATCC 49049 / DSM 4359 / NBRC 107923 / NS-E).